Consider the following 117-residue polypeptide: Large ribosomal subunit protein bL20 (117 aa).

It belongs to the bacterial ribosomal protein bL20 family.

Functionally, binds directly to 23S ribosomal RNA and is necessary for the in vitro assembly process of the 50S ribosomal subunit. It is not involved in the protein synthesizing functions of that subunit. This is Large ribosomal subunit protein bL20 from Mesomycoplasma hyopneumoniae (strain 232) (Mycoplasma hyopneumoniae).